Consider the following 509-residue polypeptide: Activin receptor type-1 (509 aa).

The signal sequence occupies residues 1 to 20; the sequence is MVDGVMILPVLMMMAFPSPS. Residues 21 to 123 are Extracellular-facing; that stretch reads VEDEKPKVNQ…FPGTQNFHLE (103 aa). An N-linked (GlcNAc...) asparagine glycan is attached at Asn102. The chain crosses the membrane as a helical span at residues 124-146; sequence VGLIILSVVFAVCLLACILGVAL. Over 147–509 the chain is Cytoplasmic; sequence RKFKRRNQER…NSLDKLKTDC (363 aa). Positions 178 to 207 constitute a GS domain; it reads STLAELLDHSCTSGSGSGLPFLVQRTVARQ. Residues 208–502 enclose the Protein kinase domain; it reads ITLLECVGKG…KTLTKIDNSL (295 aa). Residues 214-222 and Lys235 each bind ATP; that span reads VGKGRYGEV. The active-site Proton acceptor is Asp336. Ser501 carries the phosphoserine modification.

This sequence belongs to the protein kinase superfamily. TKL Ser/Thr protein kinase family. TGFB receptor subfamily. Interacts with FKBP1A. Interacts with FCHO1. Interacts with CLU. Interacts with type II receptors AMHR2 and ACVR2A. Interacts with BMP7. Interacts with BMP9. Interacts with BMP6 (when glycosylated); the interaction may induce HAMP expression. Interacts with TSC22D1/TSC-22. Requires Mg(2+) as cofactor. It depends on Mn(2+) as a cofactor. In terms of tissue distribution, highly expressed in bone during developmental stages. Expressed in normal parenchymal cells, endothelial cells, fibroblasts and tumor-derived epithelial cells.

The protein resides in the membrane. The enzyme catalyses L-threonyl-[receptor-protein] + ATP = O-phospho-L-threonyl-[receptor-protein] + ADP + H(+). The catalysed reaction is L-seryl-[receptor-protein] + ATP = O-phospho-L-seryl-[receptor-protein] + ADP + H(+). Bone morphogenetic protein (BMP) type I receptor that is involved in a wide variety of biological processes, including bone, heart, cartilage, nervous, and reproductive system development and regulation. As a type I receptor, forms heterotetrameric receptor complexes with the type II receptors AMHR2, ACVR2A ors ACVR2B. Upon binding of ligands such as BMP7 or BMP9 to the heteromeric complexes, type II receptors transphosphorylate ACVR1 intracellular domain. In turn, ACVR1 kinase domain is activated and subsequently phosphorylates SMAD1/5/8 proteins that transduce the signal. In addition to its role in mediating BMP pathway-specific signaling, suppresses TGFbeta/activin pathway signaling by interfering with the binding of activin to its type II receptor. Besides canonical SMAD signaling, can activate non-canonical pathways such as p38 mitogen-activated protein kinases/MAPKs. May promote the expression of HAMP, potentially via its interaction with BMP6. The sequence is that of Activin receptor type-1 (Acvr1) from Mus musculus (Mouse).